The primary structure comprises 280 residues: Shikimate dehydrogenase (NADP(+)) (280 aa).

Shikimate-binding positions include 15–17 (SMS) and Thr62. The active-site Proton acceptor is Lys66. Residue Glu78 coordinates NADP(+). Asn87 and Asp102 together coordinate shikimate. Residues 127–131 (GAGGA), 151–156 (NRTLEK), and Ile219 contribute to the NADP(+) site. Tyr221 contacts shikimate. NADP(+) is bound at residue Gly242.

Belongs to the shikimate dehydrogenase family. In terms of assembly, homodimer.

It catalyses the reaction shikimate + NADP(+) = 3-dehydroshikimate + NADPH + H(+). The protein operates within metabolic intermediate biosynthesis; chorismate biosynthesis; chorismate from D-erythrose 4-phosphate and phosphoenolpyruvate: step 4/7. Its function is as follows. Involved in the biosynthesis of the chorismate, which leads to the biosynthesis of aromatic amino acids. Catalyzes the reversible NADPH linked reduction of 3-dehydroshikimate (DHSA) to yield shikimate (SA). The protein is Shikimate dehydrogenase (NADP(+)) of Bacillus subtilis (strain 168).